The sequence spans 587 residues: Pyruvate kinase (587 aa).

A substrate-binding site is contributed by arginine 33. Positions 35, 37, 67, and 68 each coordinate K(+). Residue 35–38 (NFSH) participates in ATP binding. Residues arginine 74 and lysine 157 each coordinate ATP. Lysine 221 lines the substrate pocket. Mg(2+) is bound at residue glutamate 223. Substrate-binding residues include glycine 246, aspartate 247, and threonine 279. Position 247 (aspartate 247) interacts with Mg(2+).

Belongs to the pyruvate kinase family. It in the C-terminal section; belongs to the PEP-utilizing enzyme family. As to quaternary structure, homotetramer. The cofactor is Mg(2+). Requires K(+) as cofactor. The N-terminus is blocked.

It catalyses the reaction pyruvate + ATP = phosphoenolpyruvate + ADP + H(+). It functions in the pathway carbohydrate degradation; glycolysis; pyruvate from D-glyceraldehyde 3-phosphate: step 5/5. With respect to regulation, exhibits homotropic positive cooperativity for PEP. Allosterically activated by ribose-5-phosphate, AMP and other nucleoside monophosphates but not by fructose-1,6-bisphosphate. Functionally, catalyzes the phosphoryl transfer from phosphoenolpyruvate (PEP) to ADP to form pyruvate and ATP. Has a broad specificity for nucleoside diphosphates and can use ADP, GDP, IDP and UDP. This Geobacillus stearothermophilus (Bacillus stearothermophilus) protein is Pyruvate kinase (pyk).